The chain runs to 315 residues: Cysteine synthase (315 aa).

Hydrogen sulfide contacts are provided by Asn8 and Arg35. Lys42 carries the N6-(pyridoxal phosphate)lysine modification. Residues Asn72 and 177–181 (GTGGT) contribute to the pyridoxal 5'-phosphate site. Leu269 provides a ligand contact to hydrogen sulfide. Residue Ser273 participates in pyridoxal 5'-phosphate binding.

The protein belongs to the cysteine synthase/cystathionine beta-synthase family. Homodimer. Pyridoxal 5'-phosphate is required as a cofactor.

It carries out the reaction O-acetyl-L-serine + hydrogen sulfide = L-cysteine + acetate. The protein operates within amino-acid biosynthesis; L-cysteine biosynthesis; L-cysteine from L-serine: step 2/2. This Buchnera aphidicola subsp. Acyrthosiphon pisum (strain APS) (Acyrthosiphon pisum symbiotic bacterium) protein is Cysteine synthase (cysK).